Consider the following 404-residue polypeptide: Multidrug resistance protein MdtG (404 aa).

The next 11 helical transmembrane spans lie at 19-39 (LGCF…PLYV), 56-76 (LVFS…GGLA), 90-110 (LGMA…QFLI), 113-133 (ALLG…ATQA), 144-164 (TLST…GLLA), 171-191 (PVFF…FFFI), 222-242 (LFVT…ILTL), 254-274 (IAFI…LSAP), 288-308 (ILIV…FVQT), 317-337 (FLLG…LVYN), and 376-396 (AVFC…WNSL).

The protein belongs to the major facilitator superfamily. DHA1 family. MdtG (TC 2.A.1.2.20) subfamily.

Its subcellular location is the cell inner membrane. The polypeptide is Multidrug resistance protein MdtG (Salmonella paratyphi A (strain ATCC 9150 / SARB42)).